The chain runs to 817 residues: Anaphase-promoting complex subunit 4 (817 aa).

A Phosphotyrosine modification is found at Tyr-469. Phosphoserine occurs at positions 757 and 758. A Glycyl lysine isopeptide (Lys-Gly) (interchain with G-Cter in SUMO2) cross-link involves residue Lys-772. 2 positions are modified to phosphoserine: Ser-777 and Ser-779. Lys-798 is covalently cross-linked (Glycyl lysine isopeptide (Lys-Gly) (interchain with G-Cter in SUMO2)).

It belongs to the APC4 family. As to quaternary structure, the mammalian APC/C is composed at least of 14 distinct subunits ANAPC1, ANAPC2, CDC27/APC3, ANAPC4, ANAPC5, CDC16/APC6, ANAPC7, CDC23/APC8, ANAPC10, ANAPC11, CDC26/APC12, ANAPC13, ANAPC15 and ANAPC16 that assemble into a complex of at least 19 chains with a combined molecular mass of around 1.2 MDa; APC/C interacts with FZR1 and FBXO5. In the context of the APC/C complex, directly interacts with UBE2S.

It is found in the nucleus. It functions in the pathway protein modification; protein ubiquitination. Component of the anaphase promoting complex/cyclosome (APC/C), a cell cycle-regulated E3 ubiquitin ligase that controls progression through mitosis and the G1 phase of the cell cycle. The APC/C complex acts by mediating ubiquitination and subsequent degradation of target proteins: it mainly mediates the formation of 'Lys-11'-linked polyubiquitin chains and, to a lower extent, the formation of 'Lys-48'- and 'Lys-63'-linked polyubiquitin chains. The APC/C complex catalyzes assembly of branched 'Lys-11'-/'Lys-48'-linked branched ubiquitin chains on target proteins. The chain is Anaphase-promoting complex subunit 4 (ANAPC4) from Pongo abelii (Sumatran orangutan).